The chain runs to 260 residues: Ribosomal RNA small subunit methyltransferase J (260 aa).

S-adenosyl-L-methionine contacts are provided by residues 125-126 (ER) and aspartate 179.

Belongs to the methyltransferase superfamily. RsmJ family.

Its subcellular location is the cytoplasm. The enzyme catalyses guanosine(1516) in 16S rRNA + S-adenosyl-L-methionine = N(2)-methylguanosine(1516) in 16S rRNA + S-adenosyl-L-homocysteine + H(+). Its function is as follows. Specifically methylates the guanosine in position 1516 of 16S rRNA. The sequence is that of Ribosomal RNA small subunit methyltransferase J from Pseudomonas entomophila (strain L48).